The chain runs to 332 residues: Glycerol-3-phosphate dehydrogenase [NAD(P)+] (332 aa).

The NADPH site is built by tryptophan 11, arginine 30, and lysine 108. Residues lysine 108, glycine 137, and serine 139 each contribute to the sn-glycerol 3-phosphate site. Position 141 (alanine 141) interacts with NADPH. Sn-glycerol 3-phosphate-binding residues include lysine 192, aspartate 245, serine 255, arginine 256, and asparagine 257. Lysine 192 (proton acceptor) is an active-site residue. An NADPH-binding site is contributed by arginine 256. Positions 280 and 282 each coordinate NADPH.

Belongs to the NAD-dependent glycerol-3-phosphate dehydrogenase family.

It localises to the cytoplasm. The enzyme catalyses sn-glycerol 3-phosphate + NAD(+) = dihydroxyacetone phosphate + NADH + H(+). It carries out the reaction sn-glycerol 3-phosphate + NADP(+) = dihydroxyacetone phosphate + NADPH + H(+). It participates in membrane lipid metabolism; glycerophospholipid metabolism. Functionally, catalyzes the reduction of the glycolytic intermediate dihydroxyacetone phosphate (DHAP) to sn-glycerol 3-phosphate (G3P), the key precursor for phospholipid synthesis. This is Glycerol-3-phosphate dehydrogenase [NAD(P)+] from Burkholderia vietnamiensis (strain G4 / LMG 22486) (Burkholderia cepacia (strain R1808)).